Reading from the N-terminus, the 340-residue chain is MINVAVNGYGTIGKRVADAIIKQPDMKLVGVAKTSPNYEAFIAHRRGIRIYVPQQSIKKFEESGIPVAGTVEDLIKTSDIVVDTTPNGVGAQYKPIYLQLQRNAIFQGGEKAEVADISFSALCNYNEALGKKYIRVVSCNTTALLRTICTVNKVSKVEKVRATIVRRAADQKEVKKGPINSLVPDPATVPSHHAKDVNSVIRNLDIATMAVIAPTTLMHMHFINITLKDKVEKKDILSVLENTPRIVLISSKYDAEATAELVEVARDLKRDRNDIPEVMIFSDSIYVKDDEVMLMYAVHQESIVVPENIDAIRASMKLMSAEDSMRITNESLGILKGYLI.

Residues 11-12 (TI) and Gly-109 each bind NAD(+). A disulfide bond links Cys-123 and Cys-149. A D-glyceraldehyde 3-phosphate-binding site is contributed by 138 to 140 (SCN). Cys-139 functions as the Nucleophile in the catalytic mechanism. Arg-167 provides a ligand contact to NAD(+). D-glyceraldehyde 3-phosphate is bound at residue 193–194 (HA). Gln-300 provides a ligand contact to NAD(+).

Belongs to the glyceraldehyde-3-phosphate dehydrogenase family. In terms of assembly, homotetramer.

It is found in the cytoplasm. It catalyses the reaction D-glyceraldehyde 3-phosphate + phosphate + NADP(+) = (2R)-3-phospho-glyceroyl phosphate + NADPH + H(+). The enzyme catalyses D-glyceraldehyde 3-phosphate + phosphate + NAD(+) = (2R)-3-phospho-glyceroyl phosphate + NADH + H(+). Its pathway is carbohydrate degradation; glycolysis; pyruvate from D-glyceraldehyde 3-phosphate: step 1/5. Its function is as follows. Can use both NAD and NADP as cofactors, but exhibits a marked preference for NADP. The chain is Glyceraldehyde-3-phosphate dehydrogenase (gap) from Saccharolobus solfataricus (strain ATCC 35092 / DSM 1617 / JCM 11322 / P2) (Sulfolobus solfataricus).